The following is a 345-amino-acid chain: S-adenosylmethionine:tRNA ribosyltransferase-isomerase (345 aa).

The protein belongs to the QueA family. Monomer.

It is found in the cytoplasm. It carries out the reaction 7-aminomethyl-7-carbaguanosine(34) in tRNA + S-adenosyl-L-methionine = epoxyqueuosine(34) in tRNA + adenine + L-methionine + 2 H(+). It functions in the pathway tRNA modification; tRNA-queuosine biosynthesis. Functionally, transfers and isomerizes the ribose moiety from AdoMet to the 7-aminomethyl group of 7-deazaguanine (preQ1-tRNA) to give epoxyqueuosine (oQ-tRNA). The polypeptide is S-adenosylmethionine:tRNA ribosyltransferase-isomerase (Finegoldia magna (strain ATCC 29328 / DSM 20472 / WAL 2508) (Peptostreptococcus magnus)).